The following is a 202-amino-acid chain: Small ribosomal subunit protein uS4 (202 aa).

In terms of domain architecture, S4 RNA-binding spans 94 to 157 (SRLDSLVYRA…LEIPLIKNTL (64 aa)).

The protein belongs to the universal ribosomal protein uS4 family. Part of the 30S ribosomal subunit. Contacts protein S5. The interaction surface between S4 and S5 is involved in control of translational fidelity.

One of the primary rRNA binding proteins, it binds directly to 16S rRNA where it nucleates assembly of the body of the 30S subunit. Its function is as follows. With S5 and S12 plays an important role in translational accuracy. The polypeptide is Small ribosomal subunit protein uS4 (Ureaplasma parvum serovar 3 (strain ATCC 27815 / 27 / NCTC 11736)).